A 344-amino-acid polypeptide reads, in one-letter code: Holliday junction branch migration complex subunit RuvB (344 aa).

Residues 1-183 (MLDERLISSH…FGISCRLDFY (183 aa)) are large ATPase domain (RuvB-L). ATP contacts are provided by residues Ile-22, Arg-23, Gly-64, Lys-67, Thr-68, Thr-69, 130 to 132 (EDY), Arg-173, Tyr-183, and Arg-220. Thr-68 serves as a coordination point for Mg(2+). Positions 184-254 (TPLELSEIIL…LAKWALEMLE (71 aa)) are small ATPAse domain (RuvB-S). The head domain (RuvB-H) stretch occupies residues 257 to 344 (ECGLDVMDRM…LEGKGLFSDA (88 aa)). Lys-312 and Arg-317 together coordinate DNA.

This sequence belongs to the RuvB family. As to quaternary structure, homohexamer. Forms an RuvA(8)-RuvB(12)-Holliday junction (HJ) complex. HJ DNA is sandwiched between 2 RuvA tetramers; dsDNA enters through RuvA and exits via RuvB. An RuvB hexamer assembles on each DNA strand where it exits the tetramer. Each RuvB hexamer is contacted by two RuvA subunits (via domain III) on 2 adjacent RuvB subunits; this complex drives branch migration. In the full resolvosome a probable DNA-RuvA(4)-RuvB(12)-RuvC(2) complex forms which resolves the HJ.

The protein localises to the cytoplasm. The catalysed reaction is ATP + H2O = ADP + phosphate + H(+). The RuvA-RuvB-RuvC complex processes Holliday junction (HJ) DNA during genetic recombination and DNA repair, while the RuvA-RuvB complex plays an important role in the rescue of blocked DNA replication forks via replication fork reversal (RFR). RuvA specifically binds to HJ cruciform DNA, conferring on it an open structure. The RuvB hexamer acts as an ATP-dependent pump, pulling dsDNA into and through the RuvAB complex. RuvB forms 2 homohexamers on either side of HJ DNA bound by 1 or 2 RuvA tetramers; 4 subunits per hexamer contact DNA at a time. Coordinated motions by a converter formed by DNA-disengaged RuvB subunits stimulates ATP hydrolysis and nucleotide exchange. Immobilization of the converter enables RuvB to convert the ATP-contained energy into a lever motion, pulling 2 nucleotides of DNA out of the RuvA tetramer per ATP hydrolyzed, thus driving DNA branch migration. The RuvB motors rotate together with the DNA substrate, which together with the progressing nucleotide cycle form the mechanistic basis for DNA recombination by continuous HJ branch migration. Branch migration allows RuvC to scan DNA until it finds its consensus sequence, where it cleaves and resolves cruciform DNA. This Syntrophomonas wolfei subsp. wolfei (strain DSM 2245B / Goettingen) protein is Holliday junction branch migration complex subunit RuvB.